The following is a 233-amino-acid chain: Phosphoglycolate phosphatase (233 aa).

The Nucleophile role is filled by D13. Residues D13, D15, and D175 each coordinate Mg(2+).

It belongs to the HAD-like hydrolase superfamily. CbbY/CbbZ/Gph/YieH family. Mg(2+) serves as cofactor.

It carries out the reaction 2-phosphoglycolate + H2O = glycolate + phosphate. It functions in the pathway organic acid metabolism; glycolate biosynthesis; glycolate from 2-phosphoglycolate: step 1/1. Specifically catalyzes the dephosphorylation of 2-phosphoglycolate. Is involved in the dissimilation of the intracellular 2-phosphoglycolate formed during the DNA repair of 3'-phosphoglycolate ends, a major class of DNA lesions induced by oxidative stress. This Agrobacterium fabrum (strain C58 / ATCC 33970) (Agrobacterium tumefaciens (strain C58)) protein is Phosphoglycolate phosphatase.